Reading from the N-terminus, the 102-residue chain is Large ribosomal subunit protein bL21 (102 aa).

Belongs to the bacterial ribosomal protein bL21 family. In terms of assembly, part of the 50S ribosomal subunit. Contacts protein L20.

Functionally, this protein binds to 23S rRNA in the presence of protein L20. This chain is Large ribosomal subunit protein bL21, found in Staphylococcus haemolyticus (strain JCSC1435).